The primary structure comprises 474 residues: MTKKLHIKTWGCQMNEYDSSKMADLLDATHGYQLTDVAEEADVLLLNTCSIREKAQEKVFHQLGRWRLLKEKNPDLIIGVGGCVASQEGEHIRQRAHYVDIIFGPQTLHRLPEMINSVRGDRSPVVDISFPEIEKFDRLPEPRAEGPTAFVSIMEGCNKYCTYCVVPYTRGEEVSRPSDDILFEIAQLAAQGVREVNLLGQNVNAWRGENYDGTTGTFADLLRLVAAIDGIDRIRFTTSHPIEFTDDIIEVYRDTPELVSFLHLPVQSGSDRVLNLMGRTHTALEYKAIIRKLRAARPDIQISSDFIVGFPGETTDDFEKTMKLIADVNFDMSYSFIFSARPGTPAADMVDDVPEEEKKQRLYILQERINQQAMAWSRRMLGTTQRILVEGTSRKNIMELSGRTENNRVVNFEGTPEMIGKFVDVEITDVYPNSLRGKVVRTEDEMGLRVAETPESVIARTRKENELGVGFYQP.

An MTTase N-terminal domain is found at 3–120; sequence KKLHIKTWGC…LPEMINSVRG (118 aa). Residues C12, C49, C83, C157, C161, and C164 each contribute to the [4Fe-4S] cluster site. The region spanning 143–375 is the Radical SAM core domain; that stretch reads RAEGPTAFVS…QERINQQAMA (233 aa). Residues 378–441 enclose the TRAM domain; that stretch reads RRMLGTTQRI…PNSLRGKVVR (64 aa).

It belongs to the methylthiotransferase family. MiaB subfamily. As to quaternary structure, monomer. The cofactor is [4Fe-4S] cluster.

The protein localises to the cytoplasm. It catalyses the reaction N(6)-dimethylallyladenosine(37) in tRNA + (sulfur carrier)-SH + AH2 + 2 S-adenosyl-L-methionine = 2-methylsulfanyl-N(6)-dimethylallyladenosine(37) in tRNA + (sulfur carrier)-H + 5'-deoxyadenosine + L-methionine + A + S-adenosyl-L-homocysteine + 2 H(+). The enzyme catalyses N(6)-dimethylallyladenosine(37) in tRNA + (sulfur carrier)-SH + AH2 + S-adenosyl-L-methionine = 2-thio-N(6)-dimethylallyladenosine(37) in tRNA + (sulfur carrier)-H + 5'-deoxyadenosine + L-methionine + A + H(+). The catalysed reaction is 2-thio-N(6)-dimethylallyladenosine(37) in tRNA + S-adenosyl-L-methionine = 2-methylsulfanyl-N(6)-dimethylallyladenosine(37) in tRNA + S-adenosyl-L-homocysteine + H(+). Its function is as follows. Catalyzes the methylthiolation of N6-(dimethylallyl)adenosine (i(6)A), leading to the formation of 2-methylthio-N6-(dimethylallyl)adenosine (ms(2)i(6)A) at position 37 in tRNAs that read codons beginning with uridine. The chain is tRNA-2-methylthio-N(6)-dimethylallyladenosine synthase from Salmonella typhimurium (strain LT2 / SGSC1412 / ATCC 700720).